Consider the following 1723-residue polypeptide: MKWLPATAVFAAVLPALTAFGDPASVEISTSHTGSGDPTSDAALTGFTQSSTETDGTTYTIVGDITFSTFTNIPVPVVTPDANDSSSNSSKGGSSSSGATSLIRSSNLHSDFDFTKDSVLDLYHLFFPSASNTLNPALLSSSSSGGSSSSSSSSSSGSASAVVAADPKGGAAFYSNEANGTLTFTTDSGNPGSLTLQNLKMTGDGAAIYSKGPLVFTGLKNLTFTGNESQKSGGAAYTEGALTTQAIVEAVTFTGNTSAGQGGAIYVKEATLFNALDSLKFEKNTSGQAGGGIYTESTLTISNITKSIEFISNKASVPAPAPEPTSPAPSSLINSTTIDTSTLQTRAASATPAVAPVAAVTPTPISTQETAGNGGAIYAKQGISISTFKDLTFKSNSASVDATLTVDSSTIGESGGAIFAADSIQIQQCTGTTLFSGNTANKSGGGIYAVGQVTLEDIANLKMTNNTCKGEGGAIYTKKALTINNGAILTTFSGNTSTDNGGAIFAVGGITLSDLVEVRFSKNKTGNYSAPITKAASNTAPVVSSSTTAASPAVPAAAAAPVTNAAKGGALYSTEGLTVSGITSILSFENNECQNQGGGAYVTKTFQCSDSHRLQFTSNKAADEGGGLYCGDDVTLTNLTGKTLFQENSSEKHGGGLSLASGKSLTMTSLESFCLNANTAKENGGGANVPENIVLTFTYTPTPNEPAPVQQPVYGEALVTGNTATKSGGGIYTKNAAFSNLSSVTFDQNTSSENGGALLTQKAADKTDCSFTYITNVNITNNTATGNGGGIAGGKAHFDRIDNLTVQSNQAKKGGGVYLEDALILEKVITGSVSQNTATESGGGIYAKDIQLQALPGSFTITDNKVETSLTTSTNLYGGGIYSSGAVTLTNISGTFGITGNSVINTATSQDADIQGGGIYATTSLSINQCNTPILFSNNSAATKKTSTTKQIAGGAIFSAAVTIENNSQPIIFLNNSAKSEATTAATAGNKDSCGGAIAANSVTLTNNPEITFKGNYAETGGAIGCIDLTNGSPPRKVSIADNGSVLFQDNSALNRGGAIYGETIDISRTGATFIGNSSKHDGSAICCSTALTLAPNSQLIFENNKVTETTATTKASINNLGAAIYGNNETSDITISLSAENGSIFFKNNLCTATNKYCSIAGNVKFTAIEASAGKAISFYDAVNVSTKETNAQELKLNEKATSTGTILFSGELHENKSYIPQKVTFAHGNLILGKNAELSVVSFTQSPGTTITMGPGSVLSNHSKEAGGIAINNVIIDFSEIVPTKDNATVAPPTLKLVSRTNADSKDKIDITGTVTLLDPNGNLYQNSYLGEDRDITLFNIDNSASGAVTATNVTLQGNLGAKKGYLGTWNLDPNSSGSKIILKWTFDKYLRWPYIPRDNHFYINSIWGAQNSLVTVKQGILGNMLNNARFEDPAFNNFWASAIGSFLRKEVSRNSDSFTYHGRGYTAAVDAKPRQEFILGAAFSQVFGHAESEYHLDNYKHKGSGHSTQASLYAGNIFYFPAIRSRPILFQGVATYGYMQHDTTTYYPSIEEKNMANWDSIAWLFDLRFSVDLKEPQPHSTARLTFYTEAEYTRIRQEKFTELDYDPRSFSACSYGNLAIPTGFSVDGALAWREIILYNKVSAAYLPVILRNNPKATYEVLSTKEKGNVVNVLPTRNAARAEVSSQIYLGSYWTLYGTYTIDASMNTLVQMANGGIRFVF.

The N-terminal stretch at 1 to 21 (MKWLPATAVFAAVLPALTAFG) is a signal peptide. Disordered stretches follow at residues 78–100 (VTPDANDSSSNSSKGGSSSSGAT) and 139–161 (LSSSSSGGSSSSSSSSSSGSASA). Composition is skewed to low complexity over residues 85–100 (SSSNSSKGGSSSSGAT) and 140–161 (SSSSSGGSSSSSSSSSSGSASA). The Autotransporter domain occupies 1434 to 1723 (EDPAFNNFWA…MANGGIRFVF (290 aa)).

Belongs to the PMP outer membrane protein family.

It is found in the secreted. The protein localises to the cell wall. The protein resides in the cell outer membrane. The polypeptide is Probable outer membrane protein pmp20 (pmp20) (Chlamydia pneumoniae (Chlamydophila pneumoniae)).